The sequence spans 330 residues: 1-aminocyclopropane-1-carboxylate oxidase 2 (330 aa).

The Fe2OG dioxygenase domain maps to 153–253; that stretch reads PNFGTKVSNY…RMSIASFYNP (101 aa). Residues H177, D179, and H234 each coordinate Fe cation.

The protein belongs to the iron/ascorbate-dependent oxidoreductase family. In terms of assembly, monomer. Requires Fe cation as cofactor.

The catalysed reaction is 1-aminocyclopropane-1-carboxylate + L-ascorbate + O2 = ethene + L-dehydroascorbate + hydrogen cyanide + CO2 + 2 H2O. Its pathway is alkene biosynthesis; ethylene biosynthesis via S-adenosyl-L-methionine; ethylene from S-adenosyl-L-methionine: step 2/2. This chain is 1-aminocyclopropane-1-carboxylate oxidase 2 (ACO2), found in Malus domestica (Apple).